A 365-amino-acid polypeptide reads, in one-letter code: Cobalt-precorrin-5B C(1)-methyltransferase (365 aa).

It belongs to the CbiD family.

The catalysed reaction is Co-precorrin-5B + S-adenosyl-L-methionine = Co-precorrin-6A + S-adenosyl-L-homocysteine. Its pathway is cofactor biosynthesis; adenosylcobalamin biosynthesis; cob(II)yrinate a,c-diamide from sirohydrochlorin (anaerobic route): step 6/10. In terms of biological role, catalyzes the methylation of C-1 in cobalt-precorrin-5B to form cobalt-precorrin-6A. This Moorella thermoacetica (strain ATCC 39073 / JCM 9320) protein is Cobalt-precorrin-5B C(1)-methyltransferase.